A 381-amino-acid polypeptide reads, in one-letter code: Cyclin-dependent kinase inhibitor CIP1 (381 aa).

The segment covering 1 to 11 has biased composition (basic residues); it reads MLLERLHKRLH. The disordered stretch occupies residues 1 to 30; the sequence is MLLERLHKRLHAGSSRRSQENKDKNCKPED. A compositionally biased stretch (basic and acidic residues) spans 17–30; it reads RSQENKDKNCKPED. Phosphothreonine is present on residues threonine 65, threonine 69, and threonine 73.

Interact with the CDC28/CLN2 complex. In terms of processing, phosphorylated during S phase in a CDC28-dependent manner. Phosphorylated at Thr-65 and Thr-73 by HOG1 under osmotic stress. The phosphorylations of Thr-65 and Thr-73 are necessary for CIP1-induced growth inhibition.

Its subcellular location is the cytoplasm. It localises to the nucleus. Functionally, acts as an inhibitor of the CDC28/CLN2 cyclin-dependent kinase complex. Stabilizes the CDC28 inhibitor SIC1. Negatively regulates the G1/S phase transition. Contributes to osmostress-induced transitory G1 delay. This is Cyclin-dependent kinase inhibitor CIP1 from Saccharomyces cerevisiae (strain ATCC 204508 / S288c) (Baker's yeast).